We begin with the raw amino-acid sequence, 313 residues long: WD repeat-containing protein 82-A (313 aa).

6 WD repeats span residues 19–58 (ENSD…PKRT), 105–144 (GHSK…CQGL), 146–184 (HLQG…KGPF), 192–231 (DRTC…VMHT), 236–276 (NNSK…KVAV), and 280–313 (KHTG…TIDD).

This sequence belongs to the WD repeat SWD2 family. As to quaternary structure, component of the SET1/COMPASS complex. Component of the PNUTS-PP1 phosphatase complex.

It is found in the nucleus. The protein localises to the chromosome. It localises to the cytoplasm. In terms of biological role, regulatory component of the SET1/COMPASS complex implicated in the tethering of this complex to transcriptional start sites of active genes. Facilitates histone H3 'Lys-4' methylation (H3K4me) via recruitment of the SETD1A or SETD1B to the 'Ser-5' phosphorylated C-terminal domain (CTD) of RNA polymerase II large subunit (POLR2A). Component of the PNUTS-PP1 protein phosphatase complex, a protein phosphatase 1 (PP1) complex that promotes RNA polymerase II transcription pause-release, allowing transcription elongation. The polypeptide is WD repeat-containing protein 82-A (wdr82-a) (Xenopus laevis (African clawed frog)).